The chain runs to 67 residues: Small ribosomal subunit protein bS21 (67 aa).

The span at 37 to 52 (EKPSERKAREAAEAVR) shows a compositional bias: basic and acidic residues. The interval 37-67 (EKPSERKAREAAEAVRRARKMERKRLEREGF) is disordered.

It belongs to the bacterial ribosomal protein bS21 family.

The sequence is that of Small ribosomal subunit protein bS21 from Gluconacetobacter diazotrophicus (strain ATCC 49037 / DSM 5601 / CCUG 37298 / CIP 103539 / LMG 7603 / PAl5).